The sequence spans 201 residues: uncharacterized protein (201 aa).

This is an uncharacterized protein from Cestrum yellow leaf curling virus (CmYLCV).